The chain runs to 276 residues: 2-dehydro-3-deoxyphosphooctonate aldolase (276 aa).

This sequence belongs to the KdsA family.

Its subcellular location is the cytoplasm. It catalyses the reaction D-arabinose 5-phosphate + phosphoenolpyruvate + H2O = 3-deoxy-alpha-D-manno-2-octulosonate-8-phosphate + phosphate. Its pathway is carbohydrate biosynthesis; 3-deoxy-D-manno-octulosonate biosynthesis; 3-deoxy-D-manno-octulosonate from D-ribulose 5-phosphate: step 2/3. The protein operates within bacterial outer membrane biogenesis; lipopolysaccharide biosynthesis. This is 2-dehydro-3-deoxyphosphooctonate aldolase from Chelativorans sp. (strain BNC1).